We begin with the raw amino-acid sequence, 207 residues long: Guanylate kinase (207 aa).

Residues 5 to 184 (GNLFIVSAPS…ALADLVAIIR (180 aa)) enclose the Guanylate kinase-like domain. 12–19 (APSGAGKS) contributes to the ATP binding site.

The protein belongs to the guanylate kinase family.

The protein localises to the cytoplasm. It carries out the reaction GMP + ATP = GDP + ADP. Its function is as follows. Essential for recycling GMP and indirectly, cGMP. This Shewanella violacea (strain JCM 10179 / CIP 106290 / LMG 19151 / DSS12) protein is Guanylate kinase.